Consider the following 400-residue polypeptide: Lysophospholipid transporter LplT (400 aa).

The next 12 membrane-spanning stretches (helical) occupy residues 19-39 (VIVA…ATLA), 53-73 (VLQM…GQIA), 91-111 (AGAA…LVGI), 139-159 (LMEA…GVLA), 164-184 (IAAL…NLFI), 195-213 (SWRL…VVLW), 227-247 (LFWG…PVAL), 257-277 (YLNA…AKLV), 281-301 (TVSR…IFSL), 304-324 (ALLP…FFVV), 352-372 (NSAM…GVPA), and 373-393 (VAIG…LWIW).

It belongs to the major facilitator superfamily. LplT (TC 2.A.1.42) family.

It localises to the cell inner membrane. Its function is as follows. Catalyzes the facilitated diffusion of 2-acyl-glycero-3-phosphoethanolamine (2-acyl-GPE) into the cell. This chain is Lysophospholipid transporter LplT, found in Salmonella newport (strain SL254).